Consider the following 30-residue polypeptide: Photosystem I reaction center subunit XII (30 aa).

The helical transmembrane segment at 7–29 (VYTVLLIALLASVLAIRLGSTLY) threads the bilayer.

Belongs to the PsaM family.

It localises to the plastid. It is found in the chloroplast thylakoid membrane. The protein is Photosystem I reaction center subunit XII of Trieres chinensis (Marine centric diatom).